Reading from the N-terminus, the 329-residue chain is PDZ and LIM domain protein 1 (329 aa).

Threonine 2 bears the N-acetylthreonine mark. One can recognise a PDZ domain in the interval 3–85 (TQQIDLQGPG…NLTLTVARSE (83 aa)). Serine 90 and serine 130 each carry phosphoserine. Tyrosine 144 is subject to Phosphotyrosine. In terms of domain architecture, LIM zinc-binding spans 258–317 (PMCDKCGTGIVGVFVKLRDRHRHPECYVCTDCGTNLKQKGHFFVEDQIYCEKHARERVTP). Zn(2+)-binding residues include cysteine 260, cysteine 263, histidine 280, cysteine 283, cysteine 286, cysteine 289, cysteine 307, and histidine 310. Threonine 316 carries the phosphothreonine modification. Tyrosine 321 bears the Phosphotyrosine mark.

In terms of assembly, interacts with ACTN1, ACTN2 and ACTN4. Interacts with PDLIM4. Strongly expressed in the heart and skeletal muscle, moderately expressed in the spleen, small intestine, colon, placenta, and lung. A lower level expression is seen in liver, thymus, kidney, prostate and pancreas and is not found in the brain, testis, ovary, and peripheral blood leukocytes.

It localises to the cytoplasm. It is found in the cytoskeleton. The protein localises to the myofibril. Its subcellular location is the sarcomere. The protein resides in the z line. Cytoskeletal protein that may act as an adapter that brings other proteins (like kinases) to the cytoskeleton. Involved in assembly, disassembly and directioning of stress fibers in fibroblasts. Required for the localization of ACTN1 and PALLD to stress fibers. Required for cell migration and in maintaining cell polarity of fibroblasts. In Homo sapiens (Human), this protein is PDZ and LIM domain protein 1 (PDLIM1).